The chain runs to 44 residues: Conotoxin Cl9a (44 aa).

A 4-carboxyglutamate mark is found at Glu-7, Glu-8, and Glu-24. Cystine bridges form between Cys-9–Cys-33, Cys-15–Cys-40, and Cys-23–Cys-42.

As to expression, expressed by the venom duct.

It is found in the secreted. The sequence is that of Conotoxin Cl9a from Californiconus californicus (California cone).